Here is a 526-residue protein sequence, read N- to C-terminus: Reticulocyte-binding protein homolog 5 (526 aa).

An N-terminal signal peptide occupies residues 1–24 (MIRIKKKLILTIIYIHLFILNRLS). The mediates interaction with human BSG stretch occupies residues 33 to 51 (KNQENNLTLLPIKSTEEEK). N-linked (GlcNAc...) asparagine glycans are attached at residues Asn38 and Asn214. Disulfide bonds link Cys224–Cys317 and Cys345–Cys351. Positions 259–279 (EIDDKSEETDDETEEVEDSIQ) are enriched in acidic residues. The disordered stretch occupies residues 259 to 294 (EIDDKSEETDDETEEVEDSIQDTDSNHTPSNKKKND). An N-linked (GlcNAc...) asparagine glycan is attached at Asn297.

Forms a complex composed of RH5, P113 and human BSG/basigin; the complex bridges the merozoite and host erythrocyte membranes. Within the complex, interacts (via C-terminus) with human BSG/basigin isoform 2 (via the extracellular domain); the interaction is independent of BSG glycosylation status. Weakly interacts with P.troglodytes BSG but not with G.gorilla BSG. Also, interacts (via N-terminus) with P113; the interaction tethers RH5 to the merozoite membrane. Component of the PfRH5 adhesion complex composed of 1 copy of CyRPA, RH5 and RIPR; the complex is formed during merozoite invasion of host erythrocytes specifically at the interface between the parasite and host membranes. Within the complex, interacts with CyRPA. CyRPA recruits RIPR to the RH5-P113-BSG complex; the formation of the PfRH5 adhesion complex increases the affinity of RH5 for BSG and probably leads to the release of RH5 from P113 while maintaining the interaction of the PfRH5 adhesion complex with BSG. Post-translationally, cleaved into a 45kDa form during merozoite invasion of host erythrocyte.

Its subcellular location is the secreted. It is found in the cytoplasmic vesicle. It localises to the secretory vesicle. The protein resides in the rhoptry lumen. The protein localises to the host cell membrane. Essential for the invasion of host erythrocytes by blood stage merozoites. By binding P113 at the surface of the merozoite and human BSG/basigin on the erythrocyte membrane, leads to the establishment of a tight junction between the merozoite and host erythrocyte membranes. In addition, the interaction with BSG results in BSG dimerization which triggers an increase in intracellular Ca(2+) in the erythrocyte. This essential step leads to a rearrangement of the erythrocyte cytoskeleton required for the merozoite invasion. The sequence is that of Reticulocyte-binding protein homolog 5 from Plasmodium falciparum (isolate 3D7).